A 297-amino-acid polypeptide reads, in one-letter code: Ribosomal RNA small subunit methyltransferase H (297 aa).

Residues 37–39 (GGH), E56, F87, D102, and H109 each bind S-adenosyl-L-methionine.

It belongs to the methyltransferase superfamily. RsmH family.

The protein resides in the cytoplasm. The enzyme catalyses cytidine(1402) in 16S rRNA + S-adenosyl-L-methionine = N(4)-methylcytidine(1402) in 16S rRNA + S-adenosyl-L-homocysteine + H(+). Functionally, specifically methylates the N4 position of cytidine in position 1402 (C1402) of 16S rRNA. The protein is Ribosomal RNA small subunit methyltransferase H of Borrelia duttonii (strain Ly).